We begin with the raw amino-acid sequence, 93 residues long: Conotoxin F_Vc1 (93 aa).

Residues 1–22 (MQRGAVLLGVVAFLALWPQAGA) form the signal peptide. The propeptide occupies 23–33 (EPYNLNDPDVR).

This sequence belongs to the conotoxin F superfamily. In terms of processing, contains 4 disulfide bonds. Expressed by the venom duct.

The protein resides in the secreted. The sequence is that of Conotoxin F_Vc1 from Conus victoriae (Queen Victoria cone).